We begin with the raw amino-acid sequence, 431 residues long: Adenylosuccinate synthetase (431 aa).

GTP is bound by residues glycine 12–lysine 18 and glycine 40–threonine 42. Catalysis depends on aspartate 13, which acts as the Proton acceptor. The Mg(2+) site is built by aspartate 13 and glycine 40. Residues aspartate 13 to lysine 16, asparagine 38 to histidine 41, threonine 130, arginine 144, glutamine 225, threonine 240, and arginine 304 contribute to the IMP site. Histidine 41 (proton donor) is an active-site residue. Position 300–306 (alanine 300–arginine 306) interacts with substrate. GTP is bound by residues arginine 306, lysine 332–aspartate 334, and serine 414–glycine 416.

Belongs to the adenylosuccinate synthetase family. As to quaternary structure, homodimer. The cofactor is Mg(2+).

The protein localises to the cytoplasm. It catalyses the reaction IMP + L-aspartate + GTP = N(6)-(1,2-dicarboxyethyl)-AMP + GDP + phosphate + 2 H(+). Its pathway is purine metabolism; AMP biosynthesis via de novo pathway; AMP from IMP: step 1/2. Plays an important role in the de novo pathway of purine nucleotide biosynthesis. Catalyzes the first committed step in the biosynthesis of AMP from IMP. This is Adenylosuccinate synthetase from Anaeromyxobacter sp. (strain Fw109-5).